A 105-amino-acid chain; its full sequence is Met repressor (105 aa).

It belongs to the MetJ family. As to quaternary structure, homodimer.

It localises to the cytoplasm. This regulatory protein, when combined with SAM (S-adenosylmethionine) represses the expression of the methionine regulon and of enzymes involved in SAM synthesis. This is Met repressor from Glaesserella parasuis serovar 5 (strain SH0165) (Haemophilus parasuis).